The sequence spans 310 residues: Ribosomal RNA small subunit methyltransferase H (310 aa).

S-adenosyl-L-methionine-binding positions include 32–34 (GGH), Asp52, Phe79, Asp100, and Gln107.

This sequence belongs to the methyltransferase superfamily. RsmH family.

Its subcellular location is the cytoplasm. The catalysed reaction is cytidine(1402) in 16S rRNA + S-adenosyl-L-methionine = N(4)-methylcytidine(1402) in 16S rRNA + S-adenosyl-L-homocysteine + H(+). Its function is as follows. Specifically methylates the N4 position of cytidine in position 1402 (C1402) of 16S rRNA. In Bacillus cereus (strain G9842), this protein is Ribosomal RNA small subunit methyltransferase H.